A 569-amino-acid chain; its full sequence is Endonuclease/exonuclease/phosphatase family domain-containing protein 1 (569 aa).

A disordered region spans residues 1–20 (MGSTLGCHRSIPRDPSDLSH). The N-myristoyl glycine moiety is linked to residue Gly-2. Residues 11-20 (IPRDPSDLSH) show a composition bias toward basic and acidic residues. Ser-16, Ser-21, and Ser-25 each carry phosphoserine. Residues 38-67 (ERLNINTATEEELMTLPGVTRAVARSIVEY) enclose the HhH domain. A phosphoserine mark is found at Ser-106, Ser-110, Ser-160, and Ser-173. Residues 200-224 (SRPPSTHTNGGLTFTAKPHPSPTSL) form a disordered region. The segment covering 202–211 (PPSTHTNGGL) has biased composition (polar residues). At Thr-265 the chain carries Phosphothreonine. The disordered stretch occupies residues 548-569 (EVPRNGNGVTLEPSEANVKHER).

The sequence is that of Endonuclease/exonuclease/phosphatase family domain-containing protein 1 (Eepd1) from Rattus norvegicus (Rat).